A 304-amino-acid polypeptide reads, in one-letter code: Ferrochelatase (304 aa).

Fe cation-binding residues include histidine 169 and glutamate 241.

This sequence belongs to the ferrochelatase family.

The protein resides in the cytoplasm. It catalyses the reaction heme b + 2 H(+) = protoporphyrin IX + Fe(2+). The protein operates within porphyrin-containing compound metabolism; protoheme biosynthesis; protoheme from protoporphyrin-IX: step 1/1. Its function is as follows. Catalyzes the ferrous insertion into protoporphyrin IX. The polypeptide is Ferrochelatase (Thermoplasma volcanium (strain ATCC 51530 / DSM 4299 / JCM 9571 / NBRC 15438 / GSS1)).